Consider the following 312-residue polypeptide: HPr kinase/phosphorylase (312 aa).

Residues H141 and K162 contribute to the active site. 156–163 (GDSGIGKS) lines the ATP pocket. S163 serves as a coordination point for Mg(2+). Catalysis depends on D180, which acts as the Proton acceptor; for phosphorylation activity. Proton donor; for dephosphorylation activity. The important for the catalytic mechanism of both phosphorylation and dephosphorylation stretch occupies residues 204-213 (LEIRGVGIID). E205 serves as a coordination point for Mg(2+). Residue R246 is part of the active site. The important for the catalytic mechanism of dephosphorylation stretch occupies residues 267-272 (PVRVGR).

Belongs to the HPrK/P family. In terms of assembly, homohexamer. Requires Mg(2+) as cofactor.

It carries out the reaction [HPr protein]-L-serine + ATP = [HPr protein]-O-phospho-L-serine + ADP + H(+). The enzyme catalyses [HPr protein]-O-phospho-L-serine + phosphate + H(+) = [HPr protein]-L-serine + diphosphate. Its function is as follows. Catalyzes the ATP- as well as the pyrophosphate-dependent phosphorylation of a specific serine residue in HPr, a phosphocarrier protein of the phosphoenolpyruvate-dependent sugar phosphotransferase system (PTS). HprK/P also catalyzes the pyrophosphate-producing, inorganic phosphate-dependent dephosphorylation (phosphorolysis) of seryl-phosphorylated HPr (P-Ser-HPr). The two antagonistic activities of HprK/P are regulated by several intracellular metabolites, which change their concentration in response to the absence or presence of rapidly metabolisable carbon sources (glucose, fructose, etc.) in the growth medium. Therefore, by controlling the phosphorylation state of HPr, HPrK/P is a sensor enzyme that plays a major role in the regulation of carbon metabolism and sugar transport: it mediates carbon catabolite repression (CCR), and regulates PTS-catalyzed carbohydrate uptake and inducer exclusion. This Pediococcus pentosaceus (strain ATCC 25745 / CCUG 21536 / LMG 10740 / 183-1w) protein is HPr kinase/phosphorylase.